The primary structure comprises 234 residues: Thiamine-phosphate synthase (234 aa).

4-amino-2-methyl-5-(diphosphooxymethyl)pyrimidine-binding positions include 65–69 (QYRNK) and Asn-97. Asp-98 and Asp-117 together coordinate Mg(2+). Residue Ser-136 coordinates 4-amino-2-methyl-5-(diphosphooxymethyl)pyrimidine. 163–165 (SHT) contributes to the 2-[(2R,5Z)-2-carboxy-4-methylthiazol-5(2H)-ylidene]ethyl phosphate binding site. Lys-166 contacts 4-amino-2-methyl-5-(diphosphooxymethyl)pyrimidine. 2-[(2R,5Z)-2-carboxy-4-methylthiazol-5(2H)-ylidene]ethyl phosphate is bound by residues Gly-192 and 212–213 (IS).

Belongs to the thiamine-phosphate synthase family. Mg(2+) is required as a cofactor.

The enzyme catalyses 2-[(2R,5Z)-2-carboxy-4-methylthiazol-5(2H)-ylidene]ethyl phosphate + 4-amino-2-methyl-5-(diphosphooxymethyl)pyrimidine + 2 H(+) = thiamine phosphate + CO2 + diphosphate. It carries out the reaction 2-(2-carboxy-4-methylthiazol-5-yl)ethyl phosphate + 4-amino-2-methyl-5-(diphosphooxymethyl)pyrimidine + 2 H(+) = thiamine phosphate + CO2 + diphosphate. It catalyses the reaction 4-methyl-5-(2-phosphooxyethyl)-thiazole + 4-amino-2-methyl-5-(diphosphooxymethyl)pyrimidine + H(+) = thiamine phosphate + diphosphate. It functions in the pathway cofactor biosynthesis; thiamine diphosphate biosynthesis; thiamine phosphate from 4-amino-2-methyl-5-diphosphomethylpyrimidine and 4-methyl-5-(2-phosphoethyl)-thiazole: step 1/1. Condenses 4-methyl-5-(beta-hydroxyethyl)thiazole monophosphate (THZ-P) and 2-methyl-4-amino-5-hydroxymethyl pyrimidine pyrophosphate (HMP-PP) to form thiamine monophosphate (TMP). In Xylella fastidiosa (strain 9a5c), this protein is Thiamine-phosphate synthase.